A 321-amino-acid chain; its full sequence is Protein ABIL3 (321 aa).

Disordered stretches follow at residues threonine 179–serine 273 and glutamate 279–leucine 298. Composition is skewed to low complexity over residues serine 204–alanine 215 and isoleucine 240–arginine 255. Residues glutamate 279 to histidine 288 show a composition bias toward basic and acidic residues.

It belongs to the ABI family. Binds SCAR.

It localises to the cytoplasm. The protein resides in the cytoskeleton. Its function is as follows. Involved in regulation of actin and microtubule organization. Part of a WAVE complex that activates the Arp2/3 complex. In Arabidopsis thaliana (Mouse-ear cress), this protein is Protein ABIL3 (ABIL3).